The following is a 296-amino-acid chain: Stanniocalcin-2 (296 aa).

The first 24 residues, 1–24, serve as a signal peptide directing secretion; it reads MCAERLGQFVTLALVFATLDPAQG. The segment at 21–44 is disordered; the sequence is PAQGTDSTNPPEGPQDRSSQQKGR. Residues 24 to 44 show a composition bias toward polar residues; that stretch reads GTDSTNPPEGPQDRSSQQKGR. Asparagine 73 is a glycosylation site (N-linked (GlcNAc...) asparagine). A disordered region spans residues 218 to 296; that stretch reads PPTAAPEHQP…EQSEYSDIRR (79 aa). The segment covering 240-258 has biased composition (basic and acidic residues); the sequence is RDTDHHLTANRGAKGERGS. Positions 272 to 282 are enriched in low complexity; the sequence is GQSAQGPSGSS.

This sequence belongs to the stanniocalcin family. As to quaternary structure, homodimer; disulfide-linked. In terms of tissue distribution, found in a variety of tissues including skeletal muscle, small intestine, kidney, liver and brain.

Its subcellular location is the secreted. Has an anti-hypocalcemic action on calcium and phosphate homeostasis. The chain is Stanniocalcin-2 (Stc2) from Mus musculus (Mouse).